The chain runs to 547 residues: Methyl-accepting chemotaxis citrate transducer (547 aa).

The Cytoplasmic segment spans residues 1–5; sequence MKNIK. Residues 6–29 form a helical membrane-spanning segment; it reads VITGVIATLGIFSALLLVTGILFY. At 30–189 the chain is on the periplasmic side; it reads SAVSSDRLNF…ASDQNQSSFT (160 aa). The chain crosses the membrane as a helical span at residues 190-213; that stretch reads QMQWTLGIILLIVLIVLAFIWLGL. Residues 214 to 547 are Cytoplasmic-facing; the sequence is QRVLLRPLQR…AAEQANWESF (334 aa). The HAMP domain maps to 215 to 267; it reads RVLLRPLQRIMAHIQTIADGDLTHEIEAEGRSEMGQLAAGLKTMQQSLIRTVS. The Methyl-accepting transducer domain maps to 272-501; the sequence is NADSIYTGAG…ESAAAAAALE (230 aa). Q296 is modified (glutamate methyl ester (Gln)). E303 carries the glutamate methyl ester (Glu) modification. Glutamate methyl ester (Gln) is present on Q310. Positions 317–336 are disordered; the sequence is QNTDNARQATGLAKTASETA. Glutamate methyl ester (Glu) occurs at positions 492 and 501. Positions 518-547 are disordered; the sequence is KQPRREASPTTLSKGLTPQPAAEQANWESF.

Belongs to the methyl-accepting chemotaxis (MCP) protein family. Post-translationally, methylation level is increased by citrate and decreased by phenol.

The protein localises to the cell inner membrane. Acts as a receptor for citrate and mediates taxis away from phenol. Also mediates an attractant response to metal-citrate complexes. The sequence is that of Methyl-accepting chemotaxis citrate transducer (tcp) from Salmonella typhimurium (strain LT2 / SGSC1412 / ATCC 700720).